Here is a 1228-residue protein sequence, read N- to C-terminus: Calcium-transporting ATPase (1228 aa).

Topologically, residues 1 to 63 (MEEVIKNAHT…FELILNQFDD (63 aa)) are cytoplasmic. The chain crosses the membrane as a helical span at residues 64–81 (LLVKILLLAAFISFVLTL). Residues 82-92 (LDMKHKKIEIC) are Extracellular-facing. Residues 93 to 112 (DFIEPLVIVLILILNAAVGV) traverse the membrane as a helical segment. Over 113-270 (WQECNAEKSL…IDLFGQQLSK (158 aa)) the chain is Cytoplasmic. Residues 271–291 (IIFVICVTVWIINFKHFSDPI) form a helical membrane-spanning segment. The Extracellular portion of the chain corresponds to 292–300 (HGSFLYGCL). The helical transmembrane segment at 301 to 321 (YYFKISVALAVAAIPEGLPAV) threads the bilayer. Residues 322-974 (ITTCLALGTR…IYNNMKAFIR (653 aa)) lie on the Cytoplasmic side of the membrane. Asp-358 acts as the 4-aspartylphosphate intermediate in catalysis. Disordered regions lie at residues 452–478 (MKND…IPLK) and 562–613 (MPAE…LKNA). Polar residues predominate over residues 589-604 (FFSSKNDNSHITSTLN). Position 716 (Lys-716) interacts with ATP. A helical membrane pass occupies residues 975 to 994 (YLISSNIGEVASIFITALLG). The Extracellular segment spans residues 995–1000 (IPDSLA). A helical transmembrane segment spans residues 1001–1021 (PVQLLWVNLVTDGLPATALGF). The Cytoplasmic portion of the chain corresponds to 1022–1042 (NPPEHDVMKCKPRHKNDNLIN). Residues 1043–1067 (GLTLLRYIIIGTYVGIATVSIFVYW) traverse the membrane as a helical segment. Over 1068–1118 (FLFYPDSDMHTLINFYQLSHYNQCKAWNNFRVNKVYDMSEDHCSYFSAGKI) the chain is Extracellular. Residues 1119–1140 (KASTLSLSVLVLIEMFNALNAL) form a helical membrane-spanning segment. Topologically, residues 1141-1151 (SEYNSLFEIPP) are cytoplasmic. Residues 1152-1172 (WRNMYLVLATIGSLLLHVLIL) form a helical membrane-spanning segment. At 1173 to 1185 (YIPPLARIFGVVP) the chain is on the extracellular side. Residues 1186-1206 (LSAYDWFLVFLWSFPVIILDE) traverse the membrane as a helical segment. Residues 1207–1228 (IIKFYAKRKLKEEQRTKKIKID) lie on the Cytoplasmic side of the membrane.

The protein belongs to the cation transport ATPase (P-type) (TC 3.A.3) family.

The protein localises to the membrane. It carries out the reaction Ca(2+)(in) + ATP + H2O = Ca(2+)(out) + ADP + phosphate + H(+). Its function is as follows. This magnesium-dependent enzyme catalyzes the hydrolysis of ATP coupled with the transport of the calcium. This Plasmodium falciparum (isolate K1 / Thailand) protein is Calcium-transporting ATPase (ATP6).